The sequence spans 1164 residues: DNA-directed RNA polymerase 132 kDa polypeptide (1164 aa).

The protein belongs to the RNA polymerase beta chain family. The DNA-dependent RNA polymerase used for intermediate and late genes expression consists of eight subunits (147) kDa, (133) kDa, (35) kDa, (30) kDa, (22) kDa, (19) kDa, (18) kDa and (7) kDa totalling more than 500 kDa in mass. The same holoenzyme, with the addition of the transcription-specificity factor RAP94, is used for early gene expression.

It localises to the virion. It carries out the reaction RNA(n) + a ribonucleoside 5'-triphosphate = RNA(n+1) + diphosphate. In terms of biological role, part of the DNA-dependent RNA polymerase which catalyzes the transcription of viral DNA into RNA using the four ribonucleoside triphosphates as substrates. Responsible for the transcription of early, intermediate and late genes. DNA-dependent RNA polymerase associates with the early transcription factor (ETF), itself composed of D6 and A7, thereby allowing the early genes transcription. Late transcription, and probably also intermediate transcription, require newly synthesized RNA polymerase. The protein is DNA-directed RNA polymerase 132 kDa polypeptide (RPO132) of Monkeypox virus (strain Zaire-96-I-16) (MPX).